Here is a 134-residue protein sequence, read N- to C-terminus: Probable glycine cleavage system H protein (134 aa).

The Lipoyl-binding domain maps to 29–110 (TVLVGISDYA…PYENWIAKLK (82 aa)). K70 carries the post-translational modification N6-lipoyllysine.

It belongs to the GcvH family. In terms of assembly, the glycine cleavage system is composed of four proteins: P, T, L and H. (R)-lipoate serves as cofactor.

The glycine cleavage system catalyzes the degradation of glycine. The H protein shuttles the methylamine group of glycine from the P protein to the T protein. The polypeptide is Probable glycine cleavage system H protein (Thermococcus kodakarensis (strain ATCC BAA-918 / JCM 12380 / KOD1) (Pyrococcus kodakaraensis (strain KOD1))).